A 675-amino-acid chain; its full sequence is PML-RARA-regulated adapter molecule 1 (675 aa).

Over residues 1-19 (MGSNQDFRNLQAKFQTSQP) the composition is skewed to polar residues. 2 disordered regions span residues 1–473 (MGSN…GPIN) and 523–562 (TDDS…PQQL). A compositionally biased stretch (basic and acidic residues) spans 23-35 (ELFRKTPKPELNK). A compositionally biased stretch (polar residues) spans 43-58 (TELSEQPKKSSQSELS). Over residues 141–150 (PKPEFGELSK) the composition is skewed to basic and acidic residues. Composition is skewed to polar residues over residues 224–242 (RKSQ…SPSK), 251–264 (HSPQ…PKNN), and 322–331 (LQPSDLTRAS). S374 carries the phosphoserine modification. The span at 407 to 422 (SECSLPSASAGSSPQC) shows a compositional bias: polar residues. Over residues 462–471 (PAKPALPPGP) the composition is skewed to pro residues. A compositionally biased stretch (polar residues) spans 537 to 546 (LSTQQATRWP). Positions 578-656 (KAEREFRKKF…PRTALLPLET (79 aa)) constitute an SH3 domain.

As to quaternary structure, interacts with SKAP2, LCP2 and DBNL. May interact with LYN. Interacts with NEK6. In terms of processing, may be phosphorylated on tyrosines. As to expression, expressed in bone marrow and mature neutrophils. Weakly expressed in macrophages and mast cells.

Functionally, may be involved in integrin signaling in neutrophils. Binds to PtdIns(4)P. This chain is PML-RARA-regulated adapter molecule 1 (Pram1), found in Mus musculus (Mouse).